The following is a 410-amino-acid chain: Protein king tubby 2 (410 aa).

A compositionally biased stretch (polar residues) spans 48–72 (SPNNPDQILTSTGNASITTTPTSPY). 2 disordered regions span residues 48-109 (SPNN…STRH) and 121-159 (ISPALMNNNGGSHHDSSSGKSVEHSSPQASGHNDTEGDV). A compositionally biased stretch (basic and acidic residues) spans 132 to 143 (SHHDSSSGKSVE).

Belongs to the TUB family.

It localises to the cytoplasm. The protein resides in the nucleus. The sequence is that of Protein king tubby 2 (king-tubby2) from Aedes aegypti (Yellowfever mosquito).